The following is a 120-amino-acid chain: Vanadium-binding protein 2 (120 aa).

A signal peptide spans 1–20 (MSKVIFALVLVVVLVACINA). The propeptide occupies 21–29 (TYVEFEEAY). 9 disulfides stabilise this stretch: C34–C88, C38–C84, C42–C81, C48–C74, C52–C69, C56–C65, C92–C119, C97–C114, and C101–C111.

As to quaternary structure, interacts with VIP1. Expressed in vanadocytes.

The protein resides in the cytoplasm. Functionally, acts as a vanadium reductase which may form an electron transfer cascade in conjunction with NADPH and glutathione through thiol disulfide exchange reactions. Partial cleavage of its disulfide bonds results in the reduction of V(5+) to V(4+). Binds up to 24 V(4+) ions per protein at pH 7.5. Also binds Fe(3+) and Cu(2+) and, to a lesser extent, Co(2+), Zn(2+) and Ni(2+). The chain is Vanadium-binding protein 2 from Ascidia sydneiensis samea (Vanadium-rich ascidian).